The following is a 394-amino-acid chain: GTPase Obg (394 aa).

The 159-residue stretch at 4–162 (SNFVDYVKIY…LMVILELKLL (159 aa)) folds into the Obg domain. The region spanning 163-329 (ADVGLVGFPN…LKDILWTELN (167 aa)) is the OBG-type G domain. Residues 169 to 176 (GFPNAGKS), 194 to 198 (FTTLE), 216 to 219 (DIPG), 283 to 286 (TKSD), and 310 to 312 (SSV) each bind GTP. Residues Ser176 and Thr196 each contribute to the Mg(2+) site. A disordered region spans residues 358 to 394 (KDMGEDEDFEYEYEEDADDDFDYEYEDENWDEEEEKK). Over residues 361 to 394 (GEDEDFEYEYEEDADDDFDYEYEDENWDEEEEKK) the composition is skewed to acidic residues.

This sequence belongs to the TRAFAC class OBG-HflX-like GTPase superfamily. OBG GTPase family. As to quaternary structure, monomer. Mg(2+) serves as cofactor.

It localises to the cytoplasm. Functionally, an essential GTPase which binds GTP, GDP and possibly (p)ppGpp with moderate affinity, with high nucleotide exchange rates and a fairly low GTP hydrolysis rate. Plays a role in control of the cell cycle, stress response, ribosome biogenesis and in those bacteria that undergo differentiation, in morphogenesis control. The chain is GTPase Obg from Phocaeicola vulgatus (strain ATCC 8482 / DSM 1447 / JCM 5826 / CCUG 4940 / NBRC 14291 / NCTC 11154) (Bacteroides vulgatus).